Reading from the N-terminus, the 320-residue chain is Mitochondrial glutamate carrier 2 (320 aa).

3 Solcar repeats span residues 11–97, 105–215, and 224–313; these read LSIS…LRQL, RNLK…LNQL, and ASFT…GIGE. 3 consecutive transmembrane segments (helical) span residues 17 to 37, 66 to 86, and 110 to 128; these read LING…IDLA, FLGM…EKAI, and EMLA…TCPM. Ser-150 carries the phosphoserine modification. The next 3 membrane-spanning stretches (helical) occupy residues 190–210, 230–250, and 293–313; these read GLGA…PLFA, FVAG…LDVL, and ALVI…GIGE.

This sequence belongs to the mitochondrial carrier (TC 2.A.29) family.

It localises to the mitochondrion inner membrane. It carries out the reaction L-glutamate(in) + H(+)(in) = L-glutamate(out) + H(+)(out). In terms of biological role, responsible for the transport of glutamate from the cytosol into the mitochondrial matrix with the concomitant import of a proton (symport system). This chain is Mitochondrial glutamate carrier 2 (Slc25a18), found in Mus musculus (Mouse).